The sequence spans 431 residues: tRNA(Ile)-lysidine synthase (431 aa).

Position 26 to 31 (26 to 31 (SGGVDS)) interacts with ATP.

This sequence belongs to the tRNA(Ile)-lysidine synthase family.

The protein localises to the cytoplasm. The catalysed reaction is cytidine(34) in tRNA(Ile2) + L-lysine + ATP = lysidine(34) in tRNA(Ile2) + AMP + diphosphate + H(+). In terms of biological role, ligates lysine onto the cytidine present at position 34 of the AUA codon-specific tRNA(Ile) that contains the anticodon CAU, in an ATP-dependent manner. Cytidine is converted to lysidine, thus changing the amino acid specificity of the tRNA from methionine to isoleucine. The chain is tRNA(Ile)-lysidine synthase from Wolbachia pipientis wMel.